A 235-amino-acid polypeptide reads, in one-letter code: Small ribosomal subunit protein uS2c (235 aa).

Belongs to the universal ribosomal protein uS2 family.

It is found in the plastid. The protein localises to the chloroplast. The polypeptide is Small ribosomal subunit protein uS2c (rps2) (Huperzia lucidula (Shining clubmoss)).